Here is a 149-residue protein sequence, read N- to C-terminus: Small heat shock protein IbpB (149 aa).

Residues 26–137 (SQEPIDFPPY…QPQRIAIGGG (112 aa)) form the sHSP domain.

This sequence belongs to the small heat shock protein (HSP20) family. In terms of assembly, homodimer. Forms homomultimers of about 100-150 subunits at optimal growth temperatures. Conformation changes to oligomers at high temperatures or high ionic concentrations. The decrease in size of the multimers is accompanied by an increase in chaperone activity.

Its subcellular location is the cytoplasm. Its function is as follows. Associates with aggregated proteins, together with IbpA, to stabilize and protect them from irreversible denaturation and extensive proteolysis during heat shock and oxidative stress. Aggregated proteins bound to the IbpAB complex are more efficiently refolded and reactivated by the ATP-dependent chaperone systems ClpB and DnaK/DnaJ/GrpE. Its activity is ATP-independent. The sequence is that of Small heat shock protein IbpB from Pectobacterium carotovorum subsp. carotovorum (strain PC1).